Here is a 378-residue protein sequence, read N- to C-terminus: Putative protein YbfL (378 aa).

The protein belongs to the transposase 11 family.

This chain is Putative protein YbfL (ybfL), found in Escherichia coli (strain K12).